Here is a 204-residue protein sequence, read N- to C-terminus: Minor allergen Alt a 7 (204 aa).

The Flavodoxin-like domain occupies 5-195; sequence IAIVYYSMYG…NIAQAQGKAF (191 aa).

The protein belongs to the WrbA family.

It localises to the cytoplasm. This chain is Minor allergen Alt a 7 (ALTA7), found in Alternaria alternata (Alternaria rot fungus).